The sequence spans 381 residues: Diguanylate cyclase DosC (381 aa).

His-98 is a heme binding site. Residues 325–381 enclose the GGDEF domain; that stretch reads TPLSVLIIDVDKFKEINDTWGHNTGDEILRKVSFLSQKRLVKSKILGAGSSRKLAVS. Asp-333 contacts Mg(2+). The substrate site is built by Asn-341 and Asp-350.

Heme serves as cofactor. Requires Mg(2+) as cofactor.

The enzyme catalyses 2 GTP = 3',3'-c-di-GMP + 2 diphosphate. It participates in purine metabolism; 3',5'-cyclic di-GMP biosynthesis. In terms of biological role, globin-coupled heme-based oxygen sensor protein displaying diguanylate cyclase (DGC) activity in response to oxygen availability. Thus, catalyzes the synthesis of cyclic diguanylate (c-di-GMP) via the condensation of 2 GTP molecules. Cyclic-di-GMP is a second messenger which controls cell surface-associated traits in bacteria. The polypeptide is Diguanylate cyclase DosC (dosC) (Shigella flexneri).